Reading from the N-terminus, the 191-residue chain is Cell division protein SepF (191 aa).

Residues 1-77 are disordered; sequence MEGQDDYQLL…MGSNVIGLPG (77 aa).

It belongs to the SepF family. Homodimer. Interacts with FtsZ.

It is found in the cytoplasm. Cell division protein that is part of the divisome complex and is recruited early to the Z-ring. Probably stimulates Z-ring formation, perhaps through the cross-linking of FtsZ protofilaments. Its function overlaps with FtsA. The chain is Cell division protein SepF from Synechococcus sp. (strain JA-2-3B'a(2-13)) (Cyanobacteria bacterium Yellowstone B-Prime).